Here is a 463-residue protein sequence, read N- to C-terminus: L-seryl-tRNA(Sec) selenium transferase (463 aa).

Lys295 bears the N6-(pyridoxal phosphate)lysine mark.

This sequence belongs to the SelA family. In terms of assembly, homodecamer; pentamer of dimers. Binds only one seryl-tRNA(Sec) per dimer. Pyridoxal 5'-phosphate serves as cofactor.

The protein localises to the cytoplasm. The catalysed reaction is L-seryl-tRNA(Sec) + selenophosphate + H(+) = L-selenocysteinyl-tRNA(Sec) + phosphate. It participates in aminoacyl-tRNA biosynthesis; selenocysteinyl-tRNA(Sec) biosynthesis; selenocysteinyl-tRNA(Sec) from L-seryl-tRNA(Sec) (bacterial route): step 1/1. Converts seryl-tRNA(Sec) to selenocysteinyl-tRNA(Sec) required for selenoprotein biosynthesis. In Salmonella arizonae (strain ATCC BAA-731 / CDC346-86 / RSK2980), this protein is L-seryl-tRNA(Sec) selenium transferase.